The primary structure comprises 632 residues: MADQRMDISSTISDFMSPGPTDLLSGSLGTSGVDCNRKRKGSATDYQLDDFAFEESMDTDKDDPHGRLEYAEHQGRIKNAREAHSQIEKRRRDKMNSFIDELASLVPTCNAMSRKLDKLTVLRMAVQHMKTLRGATNPYTEANYKPTFLSDDELKHLILRAADGFLFVVGCDRGKILFVSESVFKILNYSQNDLIGQSLFDYLHPKDIAKVKEQLSSSDTAPRERLIDAKTGLPVKTDITPGPSRLCSGARRSFFCRMKCNRPSVKVEDKDFASTCSKKKDRKSFCTIHSTGYLKSWPPTKMGLDEDNEPDNEGCNLSCLVAIGRLHSHMVPQPANGEIRVKSMEYVSRHAIDGKFVFVDQRATAILAYLPQELLGTSCYEYFHQDDIGHLAECHRQVLQTREKITTNCYKFKIKDGSFITLRSRWFSFMNPWTKEVEYIVSTNTVVLANVLEGGDPTFPQLTAPPHSMDSMLPSGEGGPKRTHPTVPGIPGGTRAGAGKIGRMIAEEIMEIHRIRGSSPSSCGSSPLNITSTPPPDASSPGGKKILNGGTPDIPSTGLLPGQAQETPGYPYSDSSSILGENPHIGIDMIDNDQGSSSPSNDEAAMAVIMSLLEADAGLGGPVDFSDLPWPL.

A disordered region spans residues 1-39; the sequence is MADQRMDISSTISDFMSPGPTDLLSGSLGTSGVDCNRKR. Ser-17 is subject to Phosphoserine; by GSK3-beta. Thr-21 is modified (phosphothreonine; by GSK3-beta). The Nuclear localization signal signature appears at 36-41; it reads NRKRKG. A bHLH domain is found at 79-132; it reads NAREAHSQIEKRRRDKMNSFIDELASLVPTCNAMSRKLDKLTVLRMAVQHMKTL. The residue at position 85 (Ser-85) is a Phosphoserine. Ser-97 carries the post-translational modification Phosphoserine; by CK2. The short motif at 149–159 is the Nuclear export signal 1 element; it reads LSDDELKHLIL. Residues 150–222 form the PAS 1 domain; the sequence is SDDELKHLIL…EQLSSSDTAP (73 aa). Lys-259 is covalently cross-linked (Glycyl lysine isopeptide (Lys-Gly) (interchain with G-Cter in SUMO2 and SUMO3)). A Glycyl lysine isopeptide (Lys-Gly) (interchain with G-Cter in SUMO); alternate cross-link involves residue Lys-266. A Glycyl lysine isopeptide (Lys-Gly) (interchain with G-Cter in SUMO2); alternate cross-link involves residue Lys-266. Residues 333–403 enclose the PAS 2 domain; the sequence is QPANGEIRVK…CHRQVLQTRE (71 aa). The Nuclear export signal 2 motif lies at 367-375; it reads LAYLPQELL. The 44-residue stretch at 408-451 folds into the PAC domain; it reads NCYKFKIKDGSFITLRSRWFSFMNPWTKEVEYIVSTNTVVLANV. 2 disordered regions span residues 465–498 and 517–601; these read PPHS…RAGA and GSSP…SPSN. The interaction with CIART stretch occupies residues 514–594; sequence RIRGSSPSSC…IGIDMIDNDQ (81 aa). Residues 517–527 show a composition bias toward low complexity; it reads GSSPSSCGSSP. Lys-544 carries the N6-acetyllysine modification.

As to quaternary structure, component of the circadian clock oscillator which includes the CRY1/2 proteins, CLOCK or NPAS2, BMAL1 or BMAL2, CSNK1D and/or CSNK1E, TIMELESS and the PER1/2/3 proteins. Forms a heterodimer with CLOCK. The CLOCK-BMAL1 heterodimer is required for E-box-dependent transactivation, for CLOCK nuclear translocation and degradation, and, for phosphorylation of both CLOCK and BMAL1. Part of a nuclear complex which also includes RACK1 and PRKCA; RACK1 and PRKCA are recruited to the complex in a circadian manner. Interacts with NPAS2. Interacts with EZH2. Interacts with SUMO3. Interacts with SIRT1. Interacts with AHR. Interacts with ID1, ID2 and ID3. Interacts with DDX4. Interacts with OGT. Interacts with EED and SUZ12. Interacts with MTA1. Interacts with CIART. Interacts with HSP90. Interacts with KAT2B and EP300. Interacts with BHLHE40/DEC1 and BHLHE41/DEC2. Interacts with RELB and the interaction is enhanced in the presence of CLOCK. Interacts with PER1, PER2, CRY1 and CRY2 and this interaction requires a translocation to the nucleus. Interaction of the CLOCK-BMAL1 heterodimer with PER or CRY inhibits transcription activation. Interaction of the CLOCK-BMAL1 with CRY1 is independent of DNA but with PER2 is off DNA. The CLOCK-BMAL1 heterodimer interacts with GSK3B. Interacts with KDM5A. Interacts with KMT2A; in a circadian manner. Interacts with UBE3A. Interacts with PRKCG. Interacts with MAGEL2. Interacts with NCOA2. Interacts with THRAP3. The CLOCK-BMAL1 heterodimer interacts with PASD1. Interacts with PASD1. Interacts with USP9X. Interacts with PIWIL2 (via PIWI domain). Interacts with HDAC3. Interacts with HNF4A. Ubiquitinated, leading to its proteasomal degradation. Deubiquitinated by USP9X. In terms of processing, O-glycosylated; contains O-GlcNAc. O-glycosylation by OGT prevents protein degradation by inhibiting ubiquitination. It also stabilizes the CLOCK-BMAL1 heterodimer thereby increasing CLOCK-BMAL1-mediated transcription of genes in the negative loop of the circadian clock such as PER1/2/3 and CRY1/2. Post-translationally, acetylated on Lys-544 by CLOCK during the repression phase of the circadian cycle. Acetylation facilitates recruitment of CRY1 protein and initiates the repression phase of the circadian cycle. Acetylated at Lys-544 by KAT5 during the activation phase of the cycle, leading to recruitment of the positive transcription elongation factor b (P-TEFb) and BRD4, followed by productive elongation of circadian transcripts. Deacetylated by SIRT1, which may result in decreased protein stability. Phosphorylated upon dimerization with CLOCK. Phosphorylation enhances the transcriptional activity, alters the subcellular localization and decreases the stability of the CLOCK-BMAL1 heterodimer by promoting its degradation. Phosphorylation shows circadian variations in the liver with a peak between CT10 to CT14. Phosphorylation at Ser-97 by CK2 is essential for its nuclear localization, its interaction with CLOCK and controls CLOCK nuclear entry. Dephosphorylation at Ser-85 is important for dimerization with CLOCK and transcriptional activity. In terms of processing, sumoylated on Lys-266 upon dimerization with CLOCK. Predominantly conjugated to poly-SUMO2/3 rather than SUMO1 and the level of these conjugates undergo rhythmic variation, peaking at CT9-CT12. Sumoylation localizes it exclusively to the PML body and promotes its ubiquitination in the PML body, ubiquitin-dependent proteasomal degradation and the transcriptional activity of the CLOCK-BMAL1 heterodimer. Post-translationally, undergoes lysosome-mediated degradation in a time-dependent manner in the liver. Expressed in liver and testis (at protein level). Expressed in the suprachiasmatic nucleus (SCN) in a circadian manner.

It is found in the nucleus. It localises to the cytoplasm. Its subcellular location is the PML body. The redox state of the cell can modulate the transcriptional activity of the CLOCK-BMAL1 and NPAS2-BMAL1 heterodimers; NADH and NADPH enhance the DNA-binding activity of the heterodimers. Its function is as follows. Transcriptional activator which forms a core component of the circadian clock. The circadian clock, an internal time-keeping system, regulates various physiological processes through the generation of approximately 24 hour circadian rhythms in gene expression, which are translated into rhythms in metabolism and behavior. It is derived from the Latin roots 'circa' (about) and 'diem' (day) and acts as an important regulator of a wide array of physiological functions including metabolism, sleep, body temperature, blood pressure, endocrine, immune, cardiovascular, and renal function. Consists of two major components: the central clock, residing in the suprachiasmatic nucleus (SCN) of the brain, and the peripheral clocks that are present in nearly every tissue and organ system. Both the central and peripheral clocks can be reset by environmental cues, also known as Zeitgebers (German for 'timegivers'). The predominant Zeitgeber for the central clock is light, which is sensed by retina and signals directly to the SCN. The central clock entrains the peripheral clocks through neuronal and hormonal signals, body temperature and feeding-related cues, aligning all clocks with the external light/dark cycle. Circadian rhythms allow an organism to achieve temporal homeostasis with its environment at the molecular level by regulating gene expression to create a peak of protein expression once every 24 hours to control when a particular physiological process is most active with respect to the solar day. Transcription and translation of core clock components (CLOCK, NPAS2, BMAL1, BMAL2, PER1, PER2, PER3, CRY1 and CRY2) plays a critical role in rhythm generation, whereas delays imposed by post-translational modifications (PTMs) are important for determining the period (tau) of the rhythms (tau refers to the period of a rhythm and is the length, in time, of one complete cycle). A diurnal rhythm is synchronized with the day/night cycle, while the ultradian and infradian rhythms have a period shorter and longer than 24 hours, respectively. Disruptions in the circadian rhythms contribute to the pathology of cardiovascular diseases, cancer, metabolic syndromes and aging. A transcription/translation feedback loop (TTFL) forms the core of the molecular circadian clock mechanism. Transcription factors, CLOCK or NPAS2 and BMAL1 or BMAL2, form the positive limb of the feedback loop, act in the form of a heterodimer and activate the transcription of core clock genes and clock-controlled genes (involved in key metabolic processes), harboring E-box elements (5'-CACGTG-3') within their promoters. The core clock genes: PER1/2/3 and CRY1/2 which are transcriptional repressors form the negative limb of the feedback loop and interact with the CLOCK|NPAS2-BMAL1|BMAL2 heterodimer inhibiting its activity and thereby negatively regulating their own expression. This heterodimer also activates nuclear receptors NR1D1/2 and RORA/B/G, which form a second feedback loop and which activate and repress BMAL1 transcription, respectively. BMAL1 positively regulates myogenesis and negatively regulates adipogenesis via the transcriptional control of the genes of the canonical Wnt signaling pathway. Plays a role in normal pancreatic beta-cell function; regulates glucose-stimulated insulin secretion via the regulation of antioxidant genes NFE2L2/NRF2 and its targets SESN2, PRDX3, CCLC and CCLM. Negatively regulates the mTORC1 signaling pathway; regulates the expression of MTOR and DEPTOR. Controls diurnal oscillations of Ly6C inflammatory monocytes; rhythmic recruitment of the PRC2 complex imparts diurnal variation to chemokine expression that is necessary to sustain Ly6C monocyte rhythms. Regulates the expression of HSD3B2, STAR, PTGS2, CYP11A1, CYP19A1 and LHCGR in the ovary and also the genes involved in hair growth. Plays an important role in adult hippocampal neurogenesis by regulating the timely entry of neural stem/progenitor cells (NSPCs) into the cell cycle and the number of cell divisions that take place prior to cell-cycle exit. Regulates the circadian expression of CIART and KLF11. The CLOCK-BMAL1 heterodimer regulates the circadian expression of SERPINE1/PAI1, VWF, B3, CCRN4L/NOC, NAMPT, DBP, MYOD1, PPARGC1A, PPARGC1B, SIRT1, GYS2, F7, NGFR, GNRHR, BHLHE40/DEC1, ATF4, MTA1, KLF10 and also genes implicated in glucose and lipid metabolism. Promotes rhythmic chromatin opening, regulating the DNA accessibility of other transcription factors. May play a role in spermatogenesis; contributes to the chromatoid body assembly and physiology. The NPAS2-BMAL1 heterodimer positively regulates the expression of MAOA, F7 and LDHA and modulates the circadian rhythm of daytime contrast sensitivity by regulating the rhythmic expression of adenylate cyclase type 1 (ADCY1) in the retina. The preferred binding motif for the CLOCK-BMAL1 heterodimer is 5'-CACGTGA-3', which contains a flanking adenine nucleotide at the 3-prime end of the canonical 6-nucleotide E-box sequence. CLOCK specifically binds to the half-site 5'-CAC-3', while BMAL1 binds to the half-site 5'-GTGA-3'. The CLOCK-BMAL1 heterodimer also recognizes the non-canonical E-box motifs 5'-AACGTGA-3' and 5'-CATGTGA-3'. Essential for the rhythmic interaction of CLOCK with ASS1 and plays a critical role in positively regulating CLOCK-mediated acetylation of ASS1. Plays a role in protecting against lethal sepsis by limiting the expression of immune checkpoint protein CD274 in macrophages in a PKM2-dependent manner. Regulates the diurnal rhythms of skeletal muscle metabolism via transcriptional activation of genes promoting triglyceride synthesis (DGAT2) and metabolic efficiency (COQ10B). In Mus musculus (Mouse), this protein is Basic helix-loop-helix ARNT-like protein 1 (Bmal1).